Consider the following 270-residue polypeptide: 3-phenylpropionate-dihydrodiol/cinnamic acid-dihydrodiol dehydrogenase (270 aa).

10 to 34 (FITGGGSGLGLALVERFIEEGAQVA) provides a ligand contact to NAD(+). S143 lines the substrate pocket. Y156 (proton acceptor) is an active-site residue.

The protein belongs to the short-chain dehydrogenases/reductases (SDR) family.

The catalysed reaction is 3-(cis-5,6-dihydroxycyclohexa-1,3-dien-1-yl)propanoate + NAD(+) = 3-(2,3-dihydroxyphenyl)propanoate + NADH + H(+). It carries out the reaction (2E)-3-(cis-5,6-dihydroxycyclohexa-1,3-dien-1-yl)prop-2-enoate + NAD(+) = (2E)-3-(2,3-dihydroxyphenyl)prop-2-enoate + NADH + H(+). Its pathway is aromatic compound metabolism; 3-phenylpropanoate degradation. Converts 3-phenylpropionate-dihydrodiol (PP-dihydrodiol) and cinnamic acid-dihydrodiol (CI-dihydrodiol) into 3-(2,3-dihydroxylphenyl)propanoic acid (DHPP) and 2,3-dihydroxicinnamic acid (DHCI), respectively. This chain is 3-phenylpropionate-dihydrodiol/cinnamic acid-dihydrodiol dehydrogenase, found in Escherichia coli O7:K1 (strain IAI39 / ExPEC).